A 489-amino-acid polypeptide reads, in one-letter code: Protein SIP5 (489 aa).

The tract at residues 1–84 (MGNVPGKIDQ…RKTSREKELA (84 aa)) is disordered. At serine 13 the chain carries Phosphoserine. 2 stretches are compositionally biased toward polar residues: residues 21 to 32 (SSYNTTSSNSVI) and 51 to 69 (LVNN…GSHL). Threonine 183 and threonine 433 each carry phosphothreonine. The disordered stretch occupies residues 419–489 (SNRLIDPSHS…SKNRNTSLRP (71 aa)). Residue serine 436 is modified to Phosphoserine. The residue at position 438 (threonine 438) is a Phosphothreonine. Residues 461–477 (QMVREAIRLSLEDQDNR) are compositionally biased toward basic and acidic residues.

This sequence belongs to the SIP5 family. As to quaternary structure, interacts with NPA1, SNF1 and REG1.

Its subcellular location is the cytoplasm. In terms of biological role, may negatively regulate the SNF1 kinase by promoting the interaction of the REG1/GLC7 phosphatase complex with the kinase. Deletion of SIP5 promotes resistance to artemisinin, which is probably an indirect effect of an action on the electron transport chain. This is Protein SIP5 (SIP5) from Saccharomyces cerevisiae (strain ATCC 204508 / S288c) (Baker's yeast).